Reading from the N-terminus, the 273-residue chain is Elongation factor Ts (273 aa).

The segment at 80-83 is involved in Mg(2+) ion dislocation from EF-Tu; sequence TDFV.

It belongs to the EF-Ts family.

Its subcellular location is the cytoplasm. Functionally, associates with the EF-Tu.GDP complex and induces the exchange of GDP to GTP. It remains bound to the aminoacyl-tRNA.EF-Tu.GTP complex up to the GTP hydrolysis stage on the ribosome. This Tropheryma whipplei (strain Twist) (Whipple's bacillus) protein is Elongation factor Ts.